Reading from the N-terminus, the 415-residue chain is Extracellular signal-regulated kinase 1 (415 aa).

The Protein kinase domain maps to 66-369 (YQILEIVGEG…VEDALKHPYL (304 aa)). ATP contacts are provided by residues 72–80 (VGEGAYGIV) and Lys95. Catalysis depends on Asp190, which acts as the Proton acceptor. Thr226 is subject to Phosphothreonine. A TXY motif is present at residues 226–228 (TEY). Position 228 is a phosphotyrosine (Tyr228).

The protein belongs to the protein kinase superfamily. CMGC Ser/Thr protein kinase family. MAP kinase subfamily. Mg(2+) is required as a cofactor. Post-translationally, dually phosphorylated on Thr-226 and Tyr-228, which activates the enzyme.

It catalyses the reaction L-seryl-[protein] + ATP = O-phospho-L-seryl-[protein] + ADP + H(+). The enzyme catalyses L-threonyl-[protein] + ATP = O-phospho-L-threonyl-[protein] + ADP + H(+). With respect to regulation, activated by tyrosine and threonine phosphorylation. This Candida albicans (strain WO-1) (Yeast) protein is Extracellular signal-regulated kinase 1 (CEK1).